A 283-amino-acid polypeptide reads, in one-letter code: tRNA pseudouridine synthase A (283 aa).

Residue aspartate 73 is the Nucleophile of the active site. Positions 120–124 (FHARF) are RNA binding. Tyrosine 131 is a substrate binding site. The interval 181-185 (QCQSR) is interaction with tRNA.

It belongs to the tRNA pseudouridine synthase TruA family. Homodimer.

It catalyses the reaction uridine(38/39/40) in tRNA = pseudouridine(38/39/40) in tRNA. Functionally, formation of pseudouridine at positions 38, 39 and 40 in the anticodon stem and loop of transfer RNAs. This chain is tRNA pseudouridine synthase A, found in Pectobacterium atrosepticum (strain SCRI 1043 / ATCC BAA-672) (Erwinia carotovora subsp. atroseptica).